The chain runs to 597 residues: Protein Spindly (597 aa).

N-acetylmethionine is present on methionine 1. The stretch at 1 to 445 forms a coiled coil; it reads MEADITNLRN…LKLKYEPEER (445 aa). Phosphoserine occurs at positions 508 and 547. The disordered stretch occupies residues 531–597; that stretch reads PASTEVLHEQ…STPEMQCPQQ (67 aa). Residues 540 to 549 are compositionally biased toward polar residues; it reads QSGNTPSSPR. Residues 550–574 are compositionally biased toward basic and acidic residues; sequence LTEESRLPTKVKERKEATSKLEKGA. Residues 583–597 are compositionally biased toward polar residues; it reads YVSSKSTPEMQCPQQ.

It belongs to the Spindly family. In terms of assembly, interacts with KNTC1 and ZW10. These interactions appear weak and may be transient or indirect. Interacts with dynein intermediate chain and dynactin (DCTN1). Interacts with the catalytically active form of USP45. In terms of processing, monoubiquitinated with'Lys-48' linkage. Deubiquitinated by USP45.

It is found in the cytoplasm. Its subcellular location is the cytoskeleton. The protein localises to the microtubule organizing center. It localises to the centrosome. The protein resides in the chromosome. It is found in the centromere. Its subcellular location is the kinetochore. The protein localises to the nucleus. It localises to the spindle pole. Required for the localization of dynein and dynactin to the mitotic kintochore. Dynein is believed to control the initial lateral interaction between the kinetochore and spindle microtubules and to facilitate the subsequent formation of end-on kinetochore-microtubule attachments mediated by the NDC80 complex. Also required for correct spindle orientation. Does not appear to be required for the removal of spindle assembly checkpoint (SAC) proteins from the kinetochore upon bipolar spindle attachment. Acts as an adapter protein linking the dynein motor complex to various cargos and converts dynein from a non-processive to a highly processive motor in the presence of dynactin. Facilitates the interaction between dynein and dynactin and activates dynein processivity (the ability to move along a microtubule for a long distance without falling off the track). Plays a role in cell migration. The polypeptide is Protein Spindly (Spdl1) (Rattus norvegicus (Rat)).